A 61-amino-acid polypeptide reads, in one-letter code: Large ribosomal subunit protein eL29 (61 aa).

Residues 1 to 26 are compositionally biased toward basic residues; the sequence is MAKSKNHTNHNQNKKAHRNGIKRPQK. Positions 1 to 32 are disordered; that stretch reads MAKSKNHTNHNQNKKAHRNGIKRPQKHRYDSL.

It belongs to the eukaryotic ribosomal protein eL29 family. In terms of assembly, component of the large ribosomal subunit (LSU). Mature yeast ribosomes consist of a small (40S) and a large (60S) subunit. The 40S small subunit contains 1 molecule of ribosomal RNA (18S rRNA) and at least 33 different proteins. The large 60S subunit contains 3 rRNA molecules (25S, 5.8S and 5S rRNA) and at least 46 different proteins.

It localises to the cytoplasm. The protein localises to the nucleus. The protein resides in the nucleolus. In terms of biological role, component of the ribosome, a large ribonucleoprotein complex responsible for the synthesis of proteins in the cell. The small ribosomal subunit (SSU) binds messenger RNAs (mRNAs) and translates the encoded message by selecting cognate aminoacyl-transfer RNA (tRNA) molecules. The large subunit (LSU) contains the ribosomal catalytic site termed the peptidyl transferase center (PTC), which catalyzes the formation of peptide bonds, thereby polymerizing the amino acids delivered by tRNAs into a polypeptide chain. The nascent polypeptides leave the ribosome through a tunnel in the LSU and interact with protein factors that function in enzymatic processing, targeting, and the membrane insertion of nascent chains at the exit of the ribosomal tunnel. This is Large ribosomal subunit protein eL29 (rpl29) from Schizosaccharomyces pombe (strain 972 / ATCC 24843) (Fission yeast).